Here is a 3411-residue protein sequence, read N- to C-terminus: Genome polyprotein (3411 aa).

At 1-104 (MSGRKAQGKT…LSSRKRRSHD (104 aa)) the chain is on the cytoplasmic side. The propeptide at 102–121 (SHDALAVQFLILGMLLMAGG) is ER anchor for the capsid protein C, removed in mature form by serine protease NS3. Residues 105–125 (ALAVQFLILGMLLMAGGVTLV) traverse the membrane as a helical segment. At 126 to 244 (RKNRWLLLNV…GERQLQKIER (119 aa)) the chain is on the extracellular side. Asparagine 134 and asparagine 150 each carry an N-linked (GlcNAc...) asparagine; by host glycan. Residues 245-265 (WLVRNPFFAVTALTIAYLVGS) form a helical membrane-spanning segment. Residues 266–270 (NMTQR) lie on the Cytoplasmic side of the membrane. Residues 271-285 (VVIALLVLAVGPAYS) form a helical membrane-spanning segment. The Extracellular portion of the chain corresponds to 286–730 (AHCIGITDRD…TVFGSAFQGL (445 aa)). Cystine bridges form between cysteine 288-cysteine 315, cysteine 345-cysteine 401, cysteine 345-cysteine 406, cysteine 359-cysteine 390, cysteine 377-cysteine 401, cysteine 377-cysteine 406, cysteine 467-cysteine 568, and cysteine 585-cysteine 615. The segment at 383 to 396 (DRGWGNGCGLFGKG) is fusion peptide. The chain crosses the membrane as a helical span at residues 731 to 751 (FGGLSWITKVIMGAVLIWVGI). The Extracellular portion of the chain corresponds to 752-757 (NTRNMT). A helical membrane pass occupies residues 758–778 (MSMSMILVGVIMMFLSLGVGA). Over 779–1132 (DQGCAINFGK…LVRSWVTAGE (354 aa)) the chain is Extracellular. 6 disulfides stabilise this stretch: cysteine 782–cysteine 793, cysteine 833–cysteine 921, cysteine 957–cysteine 1002, cysteine 1058–cysteine 1107, cysteine 1069–cysteine 1091, and cysteine 1090–cysteine 1094. 2 N-linked (GlcNAc...) asparagine; by host glycosylation sites follow: asparagine 908 and asparagine 986. Residues 1133–1153 (IHAVPFGLVSMMIAMEVVLRK) form a helical membrane-spanning segment. The Cytoplasmic segment spans residues 1154–1201 (RQGPKQMLVGGVVLLGAMLVGQVTLLDLLKLTVAVGLHFHEMNNGGDA). The chain crosses the membrane as a helical span at residues 1202–1222 (MYMALIAAFSIRPGLLIGFGL). The Lumenal portion of the chain corresponds to 1223–1287 (RTLWSPRERL…ILPLMALLTP (65 aa)). Residues 1288-1308 (VTMAEVRLAAMLFCTVVIIGV) form a helical membrane-spanning segment. At 1309-1355 (LHQNSKDTSMQKTIPLVALTLTSYLGLTQPFLGLCAFLATRLFGRRS) the chain is on the cytoplasmic side. The chain crosses the membrane as a helical span at residues 1356–1376 (IPVNEALAAAGLVGVLAGLAF). The Lumenal portion of the chain corresponds to 1377–1378 (QE). A helical membrane pass occupies residues 1379–1399 (MENFLGPIAVGGILMMLVSVA). At 1400-1456 (GRVDGLELRKLGEVSWEEEAEISGSSARYDVALSEQGEFKLLSEEKVPWDQVVMTSL) the chain is on the cytoplasmic side. The interacts with and activates NS3 protease stretch occupies residues 1407-1446 (LRKLGEVSWEEEAEISGSSARYDVALSEQGEFKLLSEEKV). An intramembrane region (helical) is located at residues 1457–1477 (ALVGAAIHPFALLLVLAGWLF). The Cytoplasmic segment spans residues 1478-2157 (HVKGARRSGD…RNALSMMPEA (680 aa)). A Peptidase S7 domain is found at 1485–1665 (SGDVLWDIPT…EVKEEGKEEL (181 aa)). Catalysis depends on charge relay system; for serine protease NS3 activity residues histidine 1537, aspartate 1561, and serine 1622. Residues 1669–1825 (PTMLKKGMTT…HSNGEIEDVQ (157 aa)) enclose the Helicase ATP-binding domain. The interval 1673 to 1676 (KKGM) is important for RNA-binding. Position 1682–1689 (1682–1689 (FHPGAGKT)) interacts with ATP. Residues 1773–1776 (DEAH) carry the DEAH box motif. The region spanning 1820-1997 (EIEDVQTDIP…VRGGMVAPLY (178 aa)) is the Helicase C-terminal domain. Position 1877 is an N6-acetyllysine; by host (lysine 1877). The tract at residues 1942–1961 (AAQRRGRIGRNPNRDGDSYY) is disordered. A helical membrane pass occupies residues 2158-2178 (MTIAMLFILAGLLTSGMVIFF). The Lumenal segment spans residues 2179 to 2186 (MSPKGISR). The segment at residues 2187–2207 (MSMAMGTMAGCGYLMFLGGVK) is an intramembrane region (helical). The Lumenal portion of the chain corresponds to 2208–2209 (PT). Residues 2210–2230 (HISYIMLIFFVLMVVVIPEPG) traverse the membrane as a helical segment. Residues 2231–2241 (QQRSIQDNQVA) lie on the Cytoplasmic side of the membrane. Residues 2242-2262 (YLIIGILTLVSVVAANELGML) form a helical membrane-spanning segment. Over 2263 to 2293 (EKTKEDLFGKKDLIPSSASPWSWPDLDLKPG) the chain is Lumenal. An intramembrane region (helical) is located at residues 2294–2314 (AAWTVYVGIVTMLSPMLHHWI). The Lumenal segment spans residues 2315–2360 (KVEYGNLSLSGIAQSASVLSFMDKGIPFMKMNISVIILLVSGWNSI). Residues 2361-2380 (TVMPLLCGIGCAMLHWSLIL) traverse the membrane as a helical segment. The Cytoplasmic portion of the chain corresponds to 2381–2421 (PGIKAQQSKLAQRRVFHGVAKNPVVDGNPTVDIEEAPEMPA). The helical transmembrane segment at 2422–2442 (LYEKKLALYLLLALSLASVAM) threads the bilayer. At 2443-2445 (CRT) the chain is on the lumenal side. The chain crosses the membrane as a helical span at residues 2446-2466 (PFSLAEGIVLASAALGPLIEG). At 2467–3411 (NTSLLWNGPM…DADLQPGELI (945 aa)) the chain is on the cytoplasmic side. Residues 2507–2771 (GRANGKTLGE…DVILPIGTRS (265 aa)) enclose the mRNA cap 0-1 NS5-type MT domain. Position 2562 (serine 2562) interacts with S-adenosyl-L-methionine. A Phosphoserine modification is found at serine 2562. Lysine 2567 (for 2'-O-MTase activity) is an active-site residue. S-adenosyl-L-methionine contacts are provided by glycine 2592, tryptophan 2593, threonine 2610, leucine 2611, aspartate 2637, and isoleucine 2638. The active-site For 2'-O-MTase activity is the aspartate 2652. S-adenosyl-L-methionine is bound at residue isoleucine 2653. Catalysis depends on for 2'-O-MTase activity residues lysine 2688 and glutamate 2724. Tyrosine 2726 provides a ligand contact to S-adenosyl-L-methionine. Positions 2878–2911 (RKIMKVVNRWLFRHLAREKNPRLCTKEEFIAKVR) match the Nuclear localization signal motif. Residues glutamate 2945, histidine 2949, cysteine 2954, and cysteine 2957 each contribute to the Zn(2+) site. The region spanning 3035 to 3187 (GGFYADDTAG…RPIDDRFGLA (153 aa)) is the RdRp catalytic domain. Histidine 3222, cysteine 3238, and cysteine 3357 together coordinate Zn(2+).

This sequence in the N-terminal section; belongs to the class I-like SAM-binding methyltransferase superfamily. mRNA cap 0-1 NS5-type methyltransferase family. As to quaternary structure, homodimer. Interacts (via N-terminus) with host EXOC1 (via C-terminus); this interaction results in EXOC1 degradation through the proteasome degradation pathway. Forms heterodimers with envelope protein E in the endoplasmic reticulum and Golgi. In terms of assembly, homodimer; in the endoplasmic reticulum and Golgi. Interacts with protein prM. Interacts with non-structural protein 1. As to quaternary structure, homodimer; Homohexamer when secreted. Interacts with envelope protein E. Interacts (via N-terminus) with serine protease NS3. In terms of assembly, forms a heterodimer with serine protease NS3. May form homooligomers. As to quaternary structure, forms a heterodimer with NS2B. Interacts with non-structural protein 2A (via N-terminus). Interacts with NS4B. Interacts with unphosphorylated RNA-directed RNA polymerase NS5; this interaction stimulates RNA-directed RNA polymerase NS5 guanylyltransferase activity. NS3 interacts with host PDCD6IP; this interaction contributes to virion release. Interacts with serine protease NS3. In terms of assembly, homodimer. Interacts with host STAT2; this interaction prevents the establishment of cellular antiviral state. Interacts with serine protease NS3. Interacts with host TRIM23; this interaction leads to NS5 ubiquitination. Post-translationally, specific enzymatic cleavages in vivo yield mature proteins. The nascent capsid protein C contains a C-terminal hydrophobic domain that act as a signal sequence for translocation of prM into the lumen of the ER. Mature capsid protein C is cleaved at a site upstream of this hydrophobic domain by NS3. prM is cleaved in post-Golgi vesicles by a host furin, releasing the mature small envelope protein M, and peptide pr. Non-structural protein 2A-alpha, a C-terminally truncated form of non-structural protein 2A, results from partial cleavage by NS3. Specific enzymatic cleavages in vivo yield mature proteins peptide 2K acts as a signal sequence and is removed from the N-terminus of NS4B by the host signal peptidase in the ER lumen. Signal cleavage at the 2K-4B site requires a prior NS3 protease-mediated cleavage at the 4A-2K site. Cleaved in post-Golgi vesicles by a host furin, releasing the mature small envelope protein M, and peptide pr. This cleavage is incomplete as up to 30% of viral particles still carry uncleaved prM. In terms of processing, N-glycosylated. Post-translationally, N-glycosylated. The excreted form is glycosylated and this is required for efficient secretion of the protein from infected cells. Polyubiquitinated; ubiquitination is probably mediated by host TRIM23 and is prerequisite for NS5-STAT2 interaction. NS5 is not ISGylated or sumoylated. In terms of processing, acetylated by host KAT5. Acetylation modulates NS3 RNA-binding and unwinding activities and plays an important positive role for viral replication. Post-translationally, phosphorylated on serines residues. This phosphorylation may trigger NS5 nuclear localization.

Its subcellular location is the virion. The protein localises to the host nucleus. It is found in the host cytoplasm. The protein resides in the host perinuclear region. It localises to the secreted. Its subcellular location is the virion membrane. The protein localises to the host endoplasmic reticulum membrane. The enzyme catalyses Selective hydrolysis of -Xaa-Xaa-|-Yaa- bonds in which each of the Xaa can be either Arg or Lys and Yaa can be either Ser or Ala.. It catalyses the reaction RNA(n) + a ribonucleoside 5'-triphosphate = RNA(n+1) + diphosphate. It carries out the reaction a ribonucleoside 5'-triphosphate + H2O = a ribonucleoside 5'-diphosphate + phosphate + H(+). The catalysed reaction is ATP + H2O = ADP + phosphate + H(+). The enzyme catalyses a 5'-end (5'-triphosphoguanosine)-ribonucleoside in mRNA + S-adenosyl-L-methionine = a 5'-end (N(7)-methyl 5'-triphosphoguanosine)-ribonucleoside in mRNA + S-adenosyl-L-homocysteine. It catalyses the reaction a 5'-end (N(7)-methyl 5'-triphosphoguanosine)-ribonucleoside in mRNA + S-adenosyl-L-methionine = a 5'-end (N(7)-methyl 5'-triphosphoguanosine)-(2'-O-methyl-ribonucleoside) in mRNA + S-adenosyl-L-homocysteine + H(+). In terms of biological role, plays a role in virus budding by binding to the cell membrane and gathering the viral RNA into a nucleocapsid that forms the core of a mature virus particle. During virus entry, may induce genome penetration into the host cytoplasm after hemifusion induced by the surface proteins. Can migrate to the cell nucleus where it modulates host functions. Its function is as follows. Inhibits RNA silencing by interfering with host Dicer. Prevents premature fusion activity of envelope proteins in trans-Golgi by binding to envelope protein E at pH6.0. After virion release in extracellular space, gets dissociated from E dimers. Functionally, acts as a chaperone for envelope protein E during intracellular virion assembly by masking and inactivating envelope protein E fusion peptide. prM is the only viral peptide matured by host furin in the trans-Golgi network probably to avoid catastrophic activation of the viral fusion activity in acidic Golgi compartment prior to virion release. prM-E cleavage is inefficient, and many virions are only partially matured. These uncleaved prM would play a role in immune evasion. In terms of biological role, may play a role in virus budding. Exerts cytotoxic effects by activating a mitochondrial apoptotic pathway through M ectodomain. May display a viroporin activity. Its function is as follows. Binds to host cell surface receptor and mediates fusion between viral and cellular membranes. Envelope protein is synthesized in the endoplasmic reticulum in the form of heterodimer with protein prM. They play a role in virion budding in the ER, and the newly formed immature particle is covered with 60 spikes composed of heterodimer between precursor prM and envelope protein E. The virion is transported to the Golgi apparatus where the low pH causes dissociation of PrM-E heterodimers and formation of E homodimers. prM-E cleavage is inefficient, and many virions are only partially matured. These uncleaved prM would play a role in immune evasion. Involved in immune evasion, pathogenesis and viral replication. Once cleaved off the polyprotein, is targeted to three destinations: the viral replication cycle, the plasma membrane and the extracellular compartment. Essential for viral replication. Required for formation of the replication complex and recruitment of other non-structural proteins to the ER-derived membrane structures. Excreted as a hexameric lipoparticle that plays a role against host immune response. Antagonizing the complement function. Binds to the host macrophages and dendritic cells. Inhibits signal transduction originating from Toll-like receptor 3 (TLR3). Functionally, component of the viral RNA replication complex that functions in virion assembly and antagonizes the host immune response. In terms of biological role, required cofactor for the serine protease function of NS3. May have membrane-destabilizing activity and form viroporins. Its function is as follows. Displays three enzymatic activities: serine protease, NTPase and RNA helicase. NS3 serine protease, in association with NS2B, performs its autocleavage and cleaves the polyprotein at dibasic sites in the cytoplasm: C-prM, NS2A-NS2B, NS2B-NS3, NS3-NS4A, NS4A-2K and NS4B-NS5. NS3 RNA helicase binds RNA and unwinds dsRNA in the 3' to 5' direction. Also plays a role in virus assembly. Regulates the ATPase activity of the NS3 helicase activity. NS4A allows NS3 helicase to conserve energy during unwinding. Functionally, functions as a signal peptide for NS4B and is required for the interferon antagonism activity of the latter. In terms of biological role, induces the formation of ER-derived membrane vesicles where the viral replication takes place. Inhibits interferon (IFN)-induced host STAT1 phosphorylation and nuclear translocation, thereby preventing the establishment of cellular antiviral state by blocking the IFN-alpha/beta pathway. Its function is as follows. Replicates the viral (+) and (-) RNA genome, and performs the capping of genomes in the cytoplasm. NS5 methylates viral RNA cap at guanine N-7 and ribose 2'-O positions. Besides its role in RNA genome replication, also prevents the establishment of cellular antiviral state by blocking the interferon-alpha/beta (IFN-alpha/beta) signaling pathway. IFN-I induces binding of NS5 to host IFN-activated transcription factor STAT2, preventing its transcriptional activity. Host TRIM23 is the E3 ligase that interacts with and polyubiquitinates NS5 to promote its binding to STAT2 and trigger IFN-I signaling inhibition. This Yellow fever virus (isolate Ivory Coast/1999) (YFV) protein is Genome polyprotein.